Here is a 578-residue protein sequence, read N- to C-terminus: MTSKVGPVALKTFREKLGPELLEVFDKSYKSFTDVQVLSGTHLLNLSDVVVESPTGSGKTLAFVLPMMRMIQNAKLQPADIGALILSPSRELCSQIVSVIQPFAEKLNLTVETVTGGQKVDKNIKMFKNKNVNILVATPGRLFQIIQHEKTLIARKMRTLQLLVIDEADRFNEIQFEDHMREILSCIPKQRRTGLFSATQVKEEDDLMVFGLRNAKQVKVAQERNSAAPSTLKNYYVECRADEKTSVCLEFIRQRTDKKILIFFPSCNSVRYFYKIFERCLGKRPLFAVHGKCSNPHRASQIKAFSDSTNGVMISTDVMARGIDISDIDWVIQFDLPKHSSWFVHRAGRTARCGREGNALILIASEQLAYVNFLDNHEKVKLDEIKVPTNNSRKSEELRQKMIKIQVSDRAILEAGTRAFVSHVESYAKHDCHLICSLDDLNVVGLANSYALLRLPKMRELSQRKDLDMFDRSAIETSEIKYADVKLEANRETVMKEKHEKKVETLAAKDKKRREKEARKLKKMGGRFRNGGGTGRKAEEKKALKRKAEEEDDAQNDIRLLKRIKRGKLSKKEIKDVL.

Positions 7–37 (PVALKTFREKLGPELLEVFDKSYKSFTDVQV) match the Q motif motif. Residues 40 to 218 (GTHLLNLSDV…VFGLRNAKQV (179 aa)) form the Helicase ATP-binding domain. 53-60 (SPTGSGKT) lines the ATP pocket. The short motif at 166 to 169 (DEAD) is the DEAD box element. The Helicase C-terminal domain occupies 231-393 (TLKNYYVECR…EIKVPTNNSR (163 aa)). The segment at 507-557 (AAKDKKRREKEARKLKKMGGRFRNGGGTGRKAEEKKALKRKAEEEDDAQND) is disordered. Positions 510–526 (DKKRREKEARKLKKMGG) are enriched in basic residues. Residues 536–549 (RKAEEKKALKRKAE) show a composition bias toward basic and acidic residues.

The protein belongs to the DEAD box helicase family. DDX55/SPB4 subfamily.

It carries out the reaction ATP + H2O = ADP + phosphate + H(+). Its function is as follows. Probable ATP-binding RNA helicase. This chain is Probable ATP-dependent RNA helicase DDX55 homolog, found in Caenorhabditis elegans.